A 149-amino-acid chain; its full sequence is Large ribosomal subunit protein bL9 (149 aa).

This sequence belongs to the bacterial ribosomal protein bL9 family.

Its function is as follows. Binds to the 23S rRNA. The sequence is that of Large ribosomal subunit protein bL9 from Syntrophus aciditrophicus (strain SB).